Here is a 247-residue protein sequence, read N- to C-terminus: 1-(5-phosphoribosyl)-5-[(5-phosphoribosylamino)methylideneamino] imidazole-4-carboxamide isomerase (247 aa).

The active-site Proton acceptor is Asp-8. Catalysis depends on Asp-129, which acts as the Proton donor.

This sequence belongs to the HisA/HisF family.

Its subcellular location is the cytoplasm. It carries out the reaction 1-(5-phospho-beta-D-ribosyl)-5-[(5-phospho-beta-D-ribosylamino)methylideneamino]imidazole-4-carboxamide = 5-[(5-phospho-1-deoxy-D-ribulos-1-ylimino)methylamino]-1-(5-phospho-beta-D-ribosyl)imidazole-4-carboxamide. The protein operates within amino-acid biosynthesis; L-histidine biosynthesis; L-histidine from 5-phospho-alpha-D-ribose 1-diphosphate: step 4/9. This is 1-(5-phosphoribosyl)-5-[(5-phosphoribosylamino)methylideneamino] imidazole-4-carboxamide isomerase from Bradyrhizobium sp. (strain BTAi1 / ATCC BAA-1182).